A 132-amino-acid chain; its full sequence is Small ribosomal subunit protein uS8c (132 aa).

This sequence belongs to the universal ribosomal protein uS8 family. Part of the 30S ribosomal subunit.

The protein localises to the plastid. The protein resides in the chloroplast. Functionally, one of the primary rRNA binding proteins, it binds directly to 16S rRNA central domain where it helps coordinate assembly of the platform of the 30S subunit. The polypeptide is Small ribosomal subunit protein uS8c (rps8) (Marchantia polymorpha (Common liverwort)).